A 317-amino-acid polypeptide reads, in one-letter code: DNA-directed RNA polymerase subunit alpha 2 (317 aa).

The alpha N-terminal domain (alpha-NTD) stretch occupies residues 1–227 (MALENLLHPT…NQLRNIVDIE (227 aa)). Residues 241–317 (INPILLKHVE…TLIENWPQDL (77 aa)) form an alpha C-terminal domain (alpha-CTD) region.

This sequence belongs to the RNA polymerase alpha chain family. Homodimer. The RNAP catalytic core consists of 2 alpha, 1 beta, 1 beta' and 1 omega subunit. When a sigma factor is associated with the core the holoenzyme is formed, which can initiate transcription.

The catalysed reaction is RNA(n) + a ribonucleoside 5'-triphosphate = RNA(n+1) + diphosphate. DNA-dependent RNA polymerase catalyzes the transcription of DNA into RNA using the four ribonucleoside triphosphates as substrates. This chain is DNA-directed RNA polymerase subunit alpha 2, found in Francisella tularensis subsp. holarctica (strain LVS).